Consider the following 523-residue polypeptide: AarF domain-containing protein kinase 1 (523 aa).

Residues E148–L484 enclose the Protein kinase domain. Residues L154–V162 and K176 each bind ATP. D308 functions as the Proton acceptor in the catalytic mechanism.

Belongs to the protein kinase superfamily. ADCK protein kinase family.

It localises to the mitochondrion. In terms of biological role, appears to be essential for maintaining mitochondrial cristae formation and mitochondrial function by acting via YME1L1 in a kinase-independent manner to regulate essential mitochondrial structural proteins OPA1 and IMMT. The action of this enzyme is not yet clear. It is not known if it has protein kinase activity and what type of substrate it would phosphorylate (Ser, Thr or Tyr). This chain is AarF domain-containing protein kinase 1 (adck1), found in Xenopus tropicalis (Western clawed frog).